The chain runs to 399 residues: Stomatin-like protein 1 (399 aa).

The Tyrosine-type lysosomal sorting signal motif lies at 6-10 (GYRAL). Ser-28 bears the Phosphoserine mark. A helical; Signal-anchor for type III membrane protein membrane pass occupies residues 58–78 (LVSVLGFLLLLLTFPISGWFA). The Cytoplasmic segment spans residues 79 to 399 (LKIVPTYERM…KLEAVLKALK (321 aa)). The region spanning 288-399 (KQPVAEGLLT…KLEAVLKALK (112 aa)) is the SCP2 domain.

The protein belongs to the band 7/mec-2 family. Interacts with STOM; may redistribute STOM from the plasma membrane to late endosomes. As to expression, expressed in dorsal root ganglion neurons.

It localises to the membrane. It is found in the cytoplasmic vesicle. Its subcellular location is the cell membrane. The protein resides in the late endosome membrane. The protein localises to the membrane raft. May play a role in cholesterol transfer to late endosomes. May play a role in modulating membrane acid-sensing ion channels. Can specifically inhibit proton-gated current of ASIC1 isoform 1. Can increase inactivation speed of ASIC3. May be involved in regulation of proton sensing in dorsal root ganglions. This is Stomatin-like protein 1 (Stoml1) from Mus musculus (Mouse).